Reading from the N-terminus, the 124-residue chain is Small ribosomal subunit protein bS6 (124 aa).

Belongs to the bacterial ribosomal protein bS6 family.

Its function is as follows. Binds together with bS18 to 16S ribosomal RNA. This Actinobacillus pleuropneumoniae serotype 7 (strain AP76) protein is Small ribosomal subunit protein bS6.